A 445-amino-acid chain; its full sequence is MAERKYFGTDGVRGLVGQAPITPDFVMKLGWAAGQVLAKQGTKKVIIGKDTRISGYMLESALEAGLAAAGLQAKFTGPMPTPAVAYLTQTFRAEAGIVISASHNPYYDNGIKFFSSEGTKLPDDVEMAIEAELDKPMTCVESALLGKASRLNDAAGRYIEFCKSTFPKELSLAGLKIVIDCANGATYHIAPNVFKELGAEIITIGCEPNGTNINHEVGATDVRALQAKVVEEKADFGVAFDGDGDRIIMVDEFGEKVDGDQIAYIIARDALRRGELKGGVVGTLMTNMGMEVALRNLGIPFVRSDVGDRYVMEKLLENNWLIGAENSGHVILLDKVTTGDAIVAALQVIASIVGSKMSLKELCDGMTMFPQILVNVRFAGENDPLESDAVKAAQADVEAKLGDNGRVLLRKSGTEPLIRVMVEGEDAELVTQYAQQIADAVKESC.

Residue Ser102 is the Phosphoserine intermediate of the active site. Residues Ser102, Asp241, Asp243, and Asp245 each coordinate Mg(2+). Position 102 is a phosphoserine (Ser102).

This sequence belongs to the phosphohexose mutase family. The cofactor is Mg(2+). In terms of processing, activated by phosphorylation.

The catalysed reaction is alpha-D-glucosamine 1-phosphate = D-glucosamine 6-phosphate. In terms of biological role, catalyzes the conversion of glucosamine-6-phosphate to glucosamine-1-phosphate. The sequence is that of Phosphoglucosamine mutase from Aliivibrio fischeri (strain ATCC 700601 / ES114) (Vibrio fischeri).